The sequence spans 481 residues: Protein hedgehog (481 aa).

Residue Cys-93 is the site of N-palmitoyl cysteine attachment. Positions 157, 158, 163, 193, 194, 197, and 199 each coordinate Ca(2+). Residue Gly-265 is the site of Cholesterol glycine ester attachment.

Belongs to the hedgehog family. As to quaternary structure, interacts with shf. The C-terminal part of the hedgehog protein precursor displays an autoproteolysis activity that results in the cleavage of the full-length protein into two parts (N-product and C-product). In addition, the C-terminal part displays a cholesterol transferase activity that results by the covalent attachment of a cholesterol moiety to the C-terminal of the newly generated N-product. The N-product is the active species in both local and long-range signaling, whereas the C-product has no signaling activity. Post-translationally, cholesterylation is required for N-product targeting to lipid rafts and multimerization. In terms of processing, N-palmitoylation by Rasp of the hedgehog N-product, within the secretory pathway, is required for the embryonic and larval patterning activities of the hedgehog signal.

It localises to the nucleus. The protein resides in the cytoplasm. The protein localises to the cell membrane. It catalyses the reaction glycyl-L-cysteinyl-[protein] + cholesterol + H(+) = [protein]-C-terminal glycyl cholesterol ester + N-terminal L-cysteinyl-[protein]. The C-terminal part of the hedgehog protein precursor displays an autoproteolysis activity that results in the cleavage of the full-length protein into two parts (N-product and C-product). In addition, the C-terminal part displays a cholesterol transferase activity that results by the covalent attachment of a cholesterol moiety to the C-terminal of the newly generated N-product. Once cleaved, the C-product has no signaling activity and diffuses from the cell. Functionally, the dually lipidated hedgehog protein N-product is a morphogen which is essential for a variety of patterning events during development. Establishes the anterior-posterior axis of the embryonic segments and patterns the larval imaginal disks. Binds to the patched (ptc) receptor, which functions in association with smoothened (smo), to activate the transcription of target genes wingless (wg), decapentaplegic (dpp) and ptc. In the absence of hh, ptc represses the constitutive signaling activity of smo through fused (fu). Essential component of a signaling pathway which regulates the Duox-dependent gut immune response to bacterial uracil; required to activate Cad99C-dependent endosome formation, norpA-dependent Ca2+ mobilization and p38 MAPK, which are essential steps in the Duox-dependent production of reactive oxygen species (ROS) in response to intestinal bacterial infection. During photoreceptor differentiation, it up-regulates transcription of Ubr3, which in turn promotes the hh-signaling pathway by mediating the ubiquitination and degradation of cos. The protein is Protein hedgehog (hh-1) of Drosophila pseudoobscura pseudoobscura (Fruit fly).